A 478-amino-acid chain; its full sequence is Glycogen synthase (478 aa).

Position 15 (Lys-15) interacts with ADP-alpha-D-glucose.

This sequence belongs to the glycosyltransferase 1 family. Bacterial/plant glycogen synthase subfamily.

It catalyses the reaction [(1-&gt;4)-alpha-D-glucosyl](n) + ADP-alpha-D-glucose = [(1-&gt;4)-alpha-D-glucosyl](n+1) + ADP + H(+). It participates in glycan biosynthesis; glycogen biosynthesis. Its function is as follows. Synthesizes alpha-1,4-glucan chains using ADP-glucose. This chain is Glycogen synthase, found in Bacillus cytotoxicus (strain DSM 22905 / CIP 110041 / 391-98 / NVH 391-98).